The sequence spans 194 residues: Imidazoleglycerol-phosphate dehydratase (194 aa).

The protein belongs to the imidazoleglycerol-phosphate dehydratase family.

The protein localises to the cytoplasm. It carries out the reaction D-erythro-1-(imidazol-4-yl)glycerol 3-phosphate = 3-(imidazol-4-yl)-2-oxopropyl phosphate + H2O. Its pathway is amino-acid biosynthesis; L-histidine biosynthesis; L-histidine from 5-phospho-alpha-D-ribose 1-diphosphate: step 6/9. In Bacillus cereus (strain G9842), this protein is Imidazoleglycerol-phosphate dehydratase.